Reading from the N-terminus, the 152-residue chain is UPF0178 protein YE1167 (152 aa).

Belongs to the UPF0178 family.

The chain is UPF0178 protein YE1167 from Yersinia enterocolitica serotype O:8 / biotype 1B (strain NCTC 13174 / 8081).